The primary structure comprises 141 residues: Putative pre-16S rRNA nuclease (141 aa).

The protein belongs to the YqgF nuclease family.

The protein localises to the cytoplasm. Its function is as follows. Could be a nuclease involved in processing of the 5'-end of pre-16S rRNA. This chain is Putative pre-16S rRNA nuclease, found in Aliivibrio fischeri (strain MJ11) (Vibrio fischeri).